A 573-amino-acid chain; its full sequence is Vacuolar protein 8 (573 aa).

The interval M1–D36 is disordered. Over residues V27–D36 the composition is skewed to polar residues. 9 ARM repeats span residues N60–I97, T98–V137, N139–T178, E180–H219, D221–V260, N264–S303, S305–I344, P346–A386, and D430–S469.

This sequence belongs to the beta-catenin family.

Its subcellular location is the vacuole membrane. In terms of biological role, functions in both vacuole inheritance and protein targeting from the cytoplasm to vacuole. This Yarrowia lipolytica (strain CLIB 122 / E 150) (Yeast) protein is Vacuolar protein 8 (VAC8).